The sequence spans 731 residues: E3 ubiquitin-protein ligase SMURF1 (731 aa).

Residues 1–120 (MSNVVTRRGG…TGYQRLDLCK (120 aa)) form the C2 domain. The interval 210–235 (RVRGPEVREHVQTPQNRSHGFQSQDL) is disordered. A compositionally biased stretch (polar residues) spans 221–234 (QTPQNRSHGFQSQD). 2 WW domains span residues 233–266 (QDLP…DPRI) and 279–312 (GSLP…DPRL). Residues 394–731 (RPKDLKKRLM…VEETSGFAVE (338 aa)) enclose the HECT domain. Cys699 (glycyl thioester intermediate) is an active-site residue.

It localises to the cytoplasm. The protein resides in the cell membrane. It carries out the reaction S-ubiquitinyl-[E2 ubiquitin-conjugating enzyme]-L-cysteine + [acceptor protein]-L-lysine = [E2 ubiquitin-conjugating enzyme]-L-cysteine + N(6)-ubiquitinyl-[acceptor protein]-L-lysine.. The protein operates within protein modification; protein ubiquitination. E3 ubiquitin-protein ligase that acts as a negative regulator of BMP signaling pathway. Mediates ubiquitination and degradation of smad1 and smad5, 2 receptor-regulated SMADs specific for the BMP pathway. Promotes ubiquitination and subsequent proteasomal degradation of TRAF family members and rhoa. May play a role in dendrite formation by melanocytes. This Xenopus laevis (African clawed frog) protein is E3 ubiquitin-protein ligase SMURF1 (smurf1).